A 116-amino-acid chain; its full sequence is Prefoldin subunit beta (116 aa).

This sequence belongs to the prefoldin subunit beta family. As to quaternary structure, heterohexamer of two alpha and four beta subunits.

The protein resides in the cytoplasm. Its function is as follows. Molecular chaperone capable of stabilizing a range of proteins. Seems to fulfill an ATP-independent, HSP70-like function in archaeal de novo protein folding. In Archaeoglobus fulgidus (strain ATCC 49558 / DSM 4304 / JCM 9628 / NBRC 100126 / VC-16), this protein is Prefoldin subunit beta (pfdB).